The following is a 446-amino-acid chain: Carbamoyl phosphate synthase small chain, chloroplastic (446 aa).

A compositionally biased stretch (low complexity) spans 1–32 (MAAPPATASAPSLRPSAASPRAAAARSVAVPS). A disordered region spans residues 1–44 (MAAPPATASAPSLRPSAASPRAAAARSVAVPSGPRTVGPRRDGG). The transit peptide at 1 to 50 (MAAPPATASAPSLRPSAASPRAAAARSVAVPSGPRTVGPRRDGGRFLGVR) directs the protein to the chloroplast. The Glutamine amidotransferase type-1 domain maps to 261-446 (HVVAYDFGIK…FIEMMKNNRL (186 aa)). Catalysis depends on cysteine 336, which acts as the Nucleophile. Residues histidine 420 and glutamate 422 contribute to the active site.

Belongs to the CarA family. Heterodimer composed of 2 chains; the small (or glutamine) chain promotes the hydrolysis of glutamine to ammonia, which is used by the large (or ammonia) chain to synthesize carbamoyl phosphate.

It is found in the plastid. It localises to the chloroplast. The enzyme catalyses hydrogencarbonate + L-glutamine + 2 ATP + H2O = carbamoyl phosphate + L-glutamate + 2 ADP + phosphate + 2 H(+). It carries out the reaction L-glutamine + H2O = L-glutamate + NH4(+). It participates in amino-acid biosynthesis; L-arginine biosynthesis; carbamoyl phosphate from bicarbonate: step 1/1. It functions in the pathway pyrimidine metabolism; UMP biosynthesis via de novo pathway; (S)-dihydroorotate from bicarbonate: step 1/3. Functionally, small subunit of the arginine-specific carbamoyl phosphate synthase (CPSase). CPSase catalyzes the formation of carbamoyl phosphate from the ammonia moiety of glutamine, carbonate, and phosphate donated by ATP, the first step of the arginine biosynthetic pathway. The small subunit (glutamine amidotransferase) binds and cleaves glutamine to supply the large subunit with the substrate ammonia. This chain is Carbamoyl phosphate synthase small chain, chloroplastic (CARA), found in Oryza sativa subsp. japonica (Rice).